The sequence spans 678 residues: uncharacterized protein (678 aa).

Residues 1–26 are disordered; that stretch reads MGVHFDDNANTTWEATDPGVSSDCDG. The next 9 helical transmembrane spans lie at 119–139, 245–265, 317–337, 340–360, 371–391, 405–425, 443–463, 475–495, and 519–539; these read LLLLIVYCCFWMRIFYSLIYP, SFPCASAVHAGVISPFYGGCT, AAVVALNMLFGLPIFYLYDSI, YWINTIVGYWTLVLSLDPPLL, ELFSVGFQRLLPLCFVLYVVW, IAKVILWYPTFWLGISNNVTF, GALTAVGSIAATILTCAVIQA, YFKIYICFIGGLIALGSLPGL, and AYLFQGILVGLILSGVARWDF.

The protein localises to the vacuole membrane. This is an uncharacterized protein from Saccharomyces cerevisiae (strain ATCC 204508 / S288c) (Baker's yeast).